Here is a 326-residue protein sequence, read N- to C-terminus: Transmembrane protein 255B (326 aa).

The next 4 helical transmembrane spans lie at 26–46, 55–75, 85–105, and 200–220; these read LWFV…GLAA, VGGY…IIGI, LVAA…CAIV, and AVLN…LGAF. Positions 284-326 are disordered; it reads LASSEDLQPPSPSSSGSGLPGQAPPCYAPTYFPPGEKPPPYAP. The segment covering 305 to 326 has biased composition (pro residues); sequence QAPPCYAPTYFPPGEKPPPYAP.

Belongs to the TMEM255 family.

The protein resides in the membrane. The sequence is that of Transmembrane protein 255B (TMEM255B) from Homo sapiens (Human).